We begin with the raw amino-acid sequence, 101 residues long: Large ribosomal subunit protein uL23 (101 aa).

The protein belongs to the universal ribosomal protein uL23 family. As to quaternary structure, part of the 50S ribosomal subunit. Contacts protein L29, and trigger factor when it is bound to the ribosome.

Its function is as follows. One of the early assembly proteins it binds 23S rRNA. One of the proteins that surrounds the polypeptide exit tunnel on the outside of the ribosome. Forms the main docking site for trigger factor binding to the ribosome. This is Large ribosomal subunit protein uL23 from Rhodococcus erythropolis (strain PR4 / NBRC 100887).